A 30-amino-acid polypeptide reads, in one-letter code: Conopeptide Vi002 (30 aa).

In terms of tissue distribution, expressed by the venom gland.

It localises to the secreted. This chain is Conopeptide Vi002, found in Conus virgo (Virgin cone).